The primary structure comprises 342 residues: Ribosomal RNA small subunit methyltransferase C (342 aa).

This sequence belongs to the methyltransferase superfamily. RsmC family. In terms of assembly, monomer.

It is found in the cytoplasm. The enzyme catalyses guanosine(1207) in 16S rRNA + S-adenosyl-L-methionine = N(2)-methylguanosine(1207) in 16S rRNA + S-adenosyl-L-homocysteine + H(+). Functionally, specifically methylates the guanine in position 1207 of 16S rRNA in the 30S particle. The protein is Ribosomal RNA small subunit methyltransferase C of Erwinia tasmaniensis (strain DSM 17950 / CFBP 7177 / CIP 109463 / NCPPB 4357 / Et1/99).